Here is a 21-residue protein sequence, read N- to C-terminus: Testis ecdysiotropin peptide 1 (21 aa).

Residues 1-21 (ISDFDEYEPLNDADNNEVLDF) are disordered.

Its function is as follows. Start or boost ecdysteroid synthesis in testis of larvae and pupae. In Lymantria dispar (Gypsy moth), this protein is Testis ecdysiotropin peptide 1.